The primary structure comprises 231 residues: 7-cyano-7-deazaguanine synthase (231 aa).

ATP is bound at residue 8 to 18; it reads FSGGQDSTTCL. 4 residues coordinate Zn(2+): Cys188, Cys197, Cys200, and Cys203.

This sequence belongs to the QueC family. Requires Zn(2+) as cofactor.

It catalyses the reaction 7-carboxy-7-deazaguanine + NH4(+) + ATP = 7-cyano-7-deazaguanine + ADP + phosphate + H2O + H(+). Its pathway is purine metabolism; 7-cyano-7-deazaguanine biosynthesis. In terms of biological role, catalyzes the ATP-dependent conversion of 7-carboxy-7-deazaguanine (CDG) to 7-cyano-7-deazaguanine (preQ(0)). The polypeptide is 7-cyano-7-deazaguanine synthase (Salmonella paratyphi B (strain ATCC BAA-1250 / SPB7)).